Here is a 361-residue protein sequence, read N- to C-terminus: MKDQRLLDSVPLPNDPDRSLRPQVLDDFIGQEAARANLKIFIEAAKARQEALDHVLFVGPPGLGKTTLSQIMAKELGVNFRSTSGPVIAKSGDLAALLTNLEERDVLFIDEIHRLNPAIEEILYPAMEDYQLDLILGEGPAARSVKIDLAKFTLVAATTRLGLLTTPLRDRFGIPIRLNFYTIEELEYIVQRNARLFSVQISDDGAHEIARRARGTPRIAGRLLRRVCDFALVKRAKKIDRKVADEALSRLEVDHLGLDPLDRRYLLLIAETFLGGPVGIETIAAALSEPRDAIEDIIEPYLLQQGFIQRTARGRILREKAWNHLGLCAPASTISTQKCAQLLNTQDNSSGQTTLWDEADE.

Residues 1–181 (MKDQRLLDSV…FGIPIRLNFY (181 aa)) are large ATPase domain (RuvB-L). Residues L20, R21, G62, K65, T66, T67, 128 to 130 (EDY), R171, Y181, and R218 each bind ATP. Position 66 (T66) interacts with Mg(2+). The tract at residues 182 to 252 (TIEELEYIVQ…VADEALSRLE (71 aa)) is small ATPAse domain (RuvB-S). The interval 255 to 361 (HLGLDPLDRR…QTTLWDEADE (107 aa)) is head domain (RuvB-H). The DNA site is built by R291, R310, and R315.

It belongs to the RuvB family. As to quaternary structure, homohexamer. Forms an RuvA(8)-RuvB(12)-Holliday junction (HJ) complex. HJ DNA is sandwiched between 2 RuvA tetramers; dsDNA enters through RuvA and exits via RuvB. An RuvB hexamer assembles on each DNA strand where it exits the tetramer. Each RuvB hexamer is contacted by two RuvA subunits (via domain III) on 2 adjacent RuvB subunits; this complex drives branch migration. In the full resolvosome a probable DNA-RuvA(4)-RuvB(12)-RuvC(2) complex forms which resolves the HJ.

It is found in the cytoplasm. It carries out the reaction ATP + H2O = ADP + phosphate + H(+). Its function is as follows. The RuvA-RuvB-RuvC complex processes Holliday junction (HJ) DNA during genetic recombination and DNA repair, while the RuvA-RuvB complex plays an important role in the rescue of blocked DNA replication forks via replication fork reversal (RFR). RuvA specifically binds to HJ cruciform DNA, conferring on it an open structure. The RuvB hexamer acts as an ATP-dependent pump, pulling dsDNA into and through the RuvAB complex. RuvB forms 2 homohexamers on either side of HJ DNA bound by 1 or 2 RuvA tetramers; 4 subunits per hexamer contact DNA at a time. Coordinated motions by a converter formed by DNA-disengaged RuvB subunits stimulates ATP hydrolysis and nucleotide exchange. Immobilization of the converter enables RuvB to convert the ATP-contained energy into a lever motion, pulling 2 nucleotides of DNA out of the RuvA tetramer per ATP hydrolyzed, thus driving DNA branch migration. The RuvB motors rotate together with the DNA substrate, which together with the progressing nucleotide cycle form the mechanistic basis for DNA recombination by continuous HJ branch migration. Branch migration allows RuvC to scan DNA until it finds its consensus sequence, where it cleaves and resolves cruciform DNA. The sequence is that of Holliday junction branch migration complex subunit RuvB from Bartonella quintana (strain Toulouse) (Rochalimaea quintana).